The following is a 95-amino-acid chain: Small ribosomal subunit protein uS14 (95 aa).

This sequence belongs to the universal ribosomal protein uS14 family. As to quaternary structure, part of the 30S ribosomal subunit. Contacts proteins S3 and S10.

Its function is as follows. Binds 16S rRNA, required for the assembly of 30S particles and may also be responsible for determining the conformation of the 16S rRNA at the A site. This is Small ribosomal subunit protein uS14 from Fusobacterium nucleatum subsp. nucleatum (strain ATCC 25586 / DSM 15643 / BCRC 10681 / CIP 101130 / JCM 8532 / KCTC 2640 / LMG 13131 / VPI 4355).